Reading from the N-terminus, the 239-residue chain is Bradykinin-potentiating and C-type natriuretic peptides (239 aa).

A signal peptide spans 1–23 (MFVSRLAASGLLLLALLAVSLDG). Propeptides lie at residues 24 to 33 (KPVQQWSHKG) and 43 to 49 (LVVQQWS). The residue at position 50 (Gln50) is a Pyrrolidone carboxylic acid. The propeptide occupies 62-64 (VVV). Residue Gln65 is modified to Pyrrolidone carboxylic acid. Positions 76–82 (LVVQQWS) are excised as a propeptide. Gln83 is subject to Pyrrolidone carboxylic acid. The propeptide occupies 95–97 (LVV). Pyrrolidone carboxylic acid is present on Gln98. 2 consecutive propeptides follow at residues 109–136 (LLKPHESPAGGTTALREELSLGPEAALD) and 148–217 (GSKA…LAKK). Residues 132 to 205 (EAALDTPPAG…HHAVGGGGGG (74 aa)) form a disordered region. Low complexity predominate over residues 161-171 (SKGASATSAAS). The segment covering 173 to 183 (PMRDLRTDGKQ) has biased composition (basic and acidic residues). Cys223 and Cys239 form a disulfide bridge.

In the N-terminal section; belongs to the bradykinin-potentiating peptide family. This sequence in the central section; belongs to the bradykinin inhibitor peptide family. It in the C-terminal section; belongs to the natriuretic peptide family. As to expression, expressed by the venom gland.

It is found in the secreted. Its function is as follows. Bradykinin-potentiating peptides both inhibit the activity of the angiotensin-converting enzyme (ACE) and enhances the action of bradykinin by inhibiting the peptidases that inactivate it. They act as indirect hypotensive agent. Inhibits angiotensin-converting enzyme (ACE) activity (IC(50)=4.25 uM), preventing the release of angiotensin and thus indirectly contributing to hypotension. In vivo, induce hypotensive response in both normotensive and hypertensive rats. In terms of biological role, antagonizes the vasodilatory actions of bradykinin at the B2 bradykinin receptor (BDKRB2). Functionally, has a vasorelaxant activity in rat aortic strips and a diuretic potency in anesthetized rats. May act by activating natriuretic receptors (NPR1 and/or NPR2). The protein is Bradykinin-potentiating and C-type natriuretic peptides of Lachesis muta muta (Bushmaster).